A 144-amino-acid chain; its full sequence is Nucleoside diphosphate kinase (144 aa).

The ATP site is built by K11, F59, R87, T93, R104, and N114. The active-site Pros-phosphohistidine intermediate is H117.

This sequence belongs to the NDK family. Homotetramer. It depends on Mg(2+) as a cofactor.

It localises to the cytoplasm. The catalysed reaction is a 2'-deoxyribonucleoside 5'-diphosphate + ATP = a 2'-deoxyribonucleoside 5'-triphosphate + ADP. The enzyme catalyses a ribonucleoside 5'-diphosphate + ATP = a ribonucleoside 5'-triphosphate + ADP. Its function is as follows. Major role in the synthesis of nucleoside triphosphates other than ATP. The ATP gamma phosphate is transferred to the NDP beta phosphate via a ping-pong mechanism, using a phosphorylated active-site intermediate. This Aliivibrio fischeri (strain ATCC 700601 / ES114) (Vibrio fischeri) protein is Nucleoside diphosphate kinase.